We begin with the raw amino-acid sequence, 445 residues long: Flagellum-associated coiled-coil domain-containing protein 1 (445 aa).

The interval 26–47 (PQLPRKNSTGSSKLTPLVPAPK) is disordered. Residues 30-39 (RKNSTGSSKL) are compositionally biased toward polar residues. 2 coiled-coil regions span residues 122-226 (SRTN…TYQD) and 283-315 (AVFENFIQEKEELLKQHQSDTLQLEELRKTKEV). K376 carries the N6-acetyllysine modification. Residues 387–414 (EKYKHTIQILTEENIHLKQKIISKNEEI) are a coiled coil.

Its subcellular location is the cytoplasm. The protein resides in the cytoplasmic granule. It localises to the cell projection. It is found in the cilium. The protein localises to the flagellum. This Homo sapiens (Human) protein is Flagellum-associated coiled-coil domain-containing protein 1.